A 117-amino-acid chain; its full sequence is PBP1-interacting protein XAC1 (117 aa).

Residues 1-60 (MSKAPSQPAKKWMSARTLAKSEDATNRKSNTAAPASQPSQQPASVMHERPTPPPPAPVQL) form a disordered region. The span at 32-44 (AAPASQPSQQPAS) shows a compositional bias: low complexity.

In terms of assembly, forms a complex composed of at least MKT1, PBP1, XAC1 and LSM12. Forms a complex composed of at least MKT1L, PBP1, XAC1 and LSM12.

The protein localises to the cytoplasm. Functionally, involved in post-transcriptional regulation of gene expression. The protein is PBP1-interacting protein XAC1 of Trypanosoma brucei brucei (strain 927/4 GUTat10.1).